Consider the following 239-residue polypeptide: Putative antitoxin VapB45 (239 aa).

Possibly the antitoxin component of a type II toxin-antitoxin (TA) system. Its cognate toxin is VapC45. The chain is Putative antitoxin VapB45 from Mycobacterium tuberculosis (strain ATCC 25618 / H37Rv).